The primary structure comprises 162 residues: Cyclic pyranopterin monophosphate synthase (162 aa).

Substrate-binding positions include L75 to H77 and M113 to E114. D128 is an active-site residue.

It belongs to the MoaC family. As to quaternary structure, homohexamer; trimer of dimers.

It catalyses the reaction (8S)-3',8-cyclo-7,8-dihydroguanosine 5'-triphosphate = cyclic pyranopterin phosphate + diphosphate. Its pathway is cofactor biosynthesis; molybdopterin biosynthesis. Catalyzes the conversion of (8S)-3',8-cyclo-7,8-dihydroguanosine 5'-triphosphate to cyclic pyranopterin monophosphate (cPMP). In Xanthobacter autotrophicus (strain ATCC BAA-1158 / Py2), this protein is Cyclic pyranopterin monophosphate synthase.